The sequence spans 392 residues: Phospho-N-acetylmuramoyl-pentapeptide-transferase (392 aa).

Transmembrane regions (helical) follow at residues 24–44 (YLTL…LIAG), 76–96 (TMGG…WFDL), 100–120 (FVWI…VDDW), 137–157 (YFWQ…SISE), 167–187 (FITW…GLLV), 193–213 (VSYP…IVGS), 225–245 (GLAI…AYVT), 262–282 (SGEL…FLWF), 289–309 (VFMG…IAVI), 314–334 (IVLA…MLQV), and 369–389 (QVVV…LTTL).

This sequence belongs to the glycosyltransferase 4 family. MraY subfamily. The cofactor is Mg(2+).

The protein localises to the cell inner membrane. It carries out the reaction UDP-N-acetyl-alpha-D-muramoyl-L-alanyl-gamma-D-glutamyl-meso-2,6-diaminopimeloyl-D-alanyl-D-alanine + di-trans,octa-cis-undecaprenyl phosphate = di-trans,octa-cis-undecaprenyl diphospho-N-acetyl-alpha-D-muramoyl-L-alanyl-D-glutamyl-meso-2,6-diaminopimeloyl-D-alanyl-D-alanine + UMP. Its pathway is cell wall biogenesis; peptidoglycan biosynthesis. Its function is as follows. Catalyzes the initial step of the lipid cycle reactions in the biosynthesis of the cell wall peptidoglycan: transfers peptidoglycan precursor phospho-MurNAc-pentapeptide from UDP-MurNAc-pentapeptide onto the lipid carrier undecaprenyl phosphate, yielding undecaprenyl-pyrophosphoryl-MurNAc-pentapeptide, known as lipid I. The polypeptide is Phospho-N-acetylmuramoyl-pentapeptide-transferase (Acidovorax ebreus (strain TPSY) (Diaphorobacter sp. (strain TPSY))).